A 327-amino-acid chain; its full sequence is ATP-dependent (S)-NAD(P)H-hydrate dehydratase (327 aa).

A YjeF C-terminal domain is found at 11–313 (LLTRVKRIIP…RHVGKAYNAL (303 aa)). Residues Gly-121 and 174 to 180 (NVIEFKR) contribute to the (6S)-NADPHX site. ATP-binding positions include 209–213 (KGQSD) and 228–237 (GGLKRCGGQG). Asp-238 lines the (6S)-NADPHX pocket.

The protein belongs to the NnrD/CARKD family. Mg(2+) is required as a cofactor.

The protein resides in the cytoplasm. The enzyme catalyses (6S)-NADHX + ATP = ADP + phosphate + NADH + H(+). The catalysed reaction is (6S)-NADPHX + ATP = ADP + phosphate + NADPH + H(+). Catalyzes the dehydration of the S-form of NAD(P)HX at the expense of ATP, which is converted to ADP. Together with NAD(P)HX epimerase, which catalyzes the epimerization of the S- and R-forms, the enzyme allows the repair of both epimers of NAD(P)HX, a damaged form of NAD(P)H that is a result of enzymatic or heat-dependent hydration. This is ATP-dependent (S)-NAD(P)H-hydrate dehydratase from Schizosaccharomyces pombe (strain 972 / ATCC 24843) (Fission yeast).